The chain runs to 600 residues: Aspartate--tRNA(Asp/Asn) ligase (600 aa).

An L-aspartate-binding site is contributed by E174. The interval 198–201 (QLFK) is aspartate. Position 220 (R220) interacts with L-aspartate. ATP is bound by residues 220 to 222 (RDE) and Q229. Residue H457 coordinates L-aspartate. Residue E491 coordinates ATP. L-aspartate is bound at residue R498. 543 to 546 (GLDR) is a binding site for ATP.

The protein belongs to the class-II aminoacyl-tRNA synthetase family. Type 1 subfamily. Homodimer.

Its subcellular location is the cytoplasm. The enzyme catalyses tRNA(Asx) + L-aspartate + ATP = L-aspartyl-tRNA(Asx) + AMP + diphosphate. Its function is as follows. Aspartyl-tRNA synthetase with relaxed tRNA specificity since it is able to aspartylate not only its cognate tRNA(Asp) but also tRNA(Asn). Reaction proceeds in two steps: L-aspartate is first activated by ATP to form Asp-AMP and then transferred to the acceptor end of tRNA(Asp/Asn). In Burkholderia ambifaria (strain ATCC BAA-244 / DSM 16087 / CCUG 44356 / LMG 19182 / AMMD) (Burkholderia cepacia (strain AMMD)), this protein is Aspartate--tRNA(Asp/Asn) ligase.